A 394-amino-acid chain; its full sequence is Seipin (394 aa).

The Cytoplasmic portion of the chain corresponds to 1-27 (MVNDPPVPALLWAQEMGHVMAGRARKL). The chain crosses the membrane as a helical span at residues 28–48 (LLQFGVFFCTILLLLWVSVFL). Residues 49 to 242 (YGSFYYSYMP…TCAFVGVASN (194 aa)) lie on the Lumenal side of the membrane. Asn88 and Asn242 each carry an N-linked (GlcNAc...) asparagine glycan. A helical membrane pass occupies residues 243 to 263 (FTFLSVIVLFSYMQWVWGGIW). Topologically, residues 264–394 (PRQRLSLQVN…VRQRPICSSS (131 aa)) are cytoplasmic. The segment at 281 to 394 (RKDIQRKVSA…VRQRPICSSS (114 aa)) is disordered. Residue Ser289 is modified to Phosphoserine. The span at 292–303 (QPGPQGQEESPQ) shows a compositional bias: low complexity. A phosphoserine mark is found at Ser346 and Ser351.

The protein belongs to the seipin family. In terms of assembly, undecamer (an oligomer having eleven subunits). Oligomerization is important for its function in lipid droplet formation. Interacts with LDAF1 to form an oligomeric complex. Interacts with RAB18. Interacts with ZFYVE1 in a RAB18-dependent manner.

Its subcellular location is the endoplasmic reticulum membrane. The protein resides in the lipid droplet. Plays a crucial role in the formation of lipid droplets (LDs) which are storage organelles at the center of lipid and energy homeostasis. In association with LDAF1, defines the sites of LD formation in the ER. Also required for growth and maturation of small nascent LDs into larger mature LDs. Mediates the formation and/or stabilization of endoplasmic reticulum-lipid droplets (ER-LD) contacts, facilitating protein and lipid delivery from the ER into growing LDs. Regulates the maturation of ZFYVE1-positive nascent LDs and the function of the RAB18-ZFYVE1 complex in mediating the formation of ER-LD contacts. Binds anionic phospholipids including phosphatidic acid. Plays an important role in the differentiation and development of adipocytes. This Bos taurus (Bovine) protein is Seipin.